The primary structure comprises 270 residues: Glucosamine-6-phosphate deaminase (270 aa).

Asp72 (proton acceptor; for enolization step) is an active-site residue. The For ring-opening step role is filled by Asp141. The active-site Proton acceptor; for ring-opening step is His143. Glu148 functions as the For ring-opening step in the catalytic mechanism.

Belongs to the glucosamine/galactosamine-6-phosphate isomerase family. NagB subfamily. In terms of assembly, homohexamer.

The enzyme catalyses alpha-D-glucosamine 6-phosphate + H2O = beta-D-fructose 6-phosphate + NH4(+). It functions in the pathway amino-sugar metabolism; N-acetylneuraminate degradation; D-fructose 6-phosphate from N-acetylneuraminate: step 5/5. With respect to regulation, allosterically activated by N-acetylglucosamine 6-phosphate (GlcNAc6P). Functionally, catalyzes the reversible isomerization-deamination of glucosamine 6-phosphate (GlcN6P) to form fructose 6-phosphate (Fru6P) and ammonium ion. The sequence is that of Glucosamine-6-phosphate deaminase from Haemophilus influenzae (strain 86-028NP).